The primary structure comprises 198 residues: Rac-like GTP-binding protein ARAC3 (198 aa).

GTP is bound by residues G13 to C21, F31 to T38, D60 to Q64, and T118 to D121. The short motif at Y35–F43 is the Effector region element. C158 carries S-palmitoyl cysteine lipidation. C195 is subject to Cysteine methyl ester. C195 carries the S-geranylgeranyl cysteine lipid modification. The propeptide at S196–L198 is removed in mature form.

Belongs to the small GTPase superfamily. Rho family. As to quaternary structure, interacts with Rho GDP-dissociation inhibitor 1 and ICR1. Binds to SPK1 when in the inactive GDP-bound form. In terms of tissue distribution, ubiquitous. Preferentially expressed at the tip of root hairs.

Its subcellular location is the cytoplasm. It localises to the cell membrane. Functionally, inactive GDP-bound Rho GTPases reside in the cytosol, are found in a complex with Rho GDP-dissociation inhibitors (Rho GDIs), and are released from the GDI protein in order to translocate to membranes upon activation. Involved in cell polarity control during the actin-dependent tip growth of root hairs, thus regulating root hair length and root hair initiation. Contributes, in a SPK1-dependent manner, to the prevention of cortical microtubules organization into parallel arrays oriented perpendicular to the axis of cell elongation to limit anisotropic cell growth during petal development. SPK1-dependent activation is required for auxin-mediated inhibition of PIN2 internalization during gravitropic responses. The chain is Rac-like GTP-binding protein ARAC3 from Arabidopsis thaliana (Mouse-ear cress).